The following is a 320-amino-acid chain: Olfactory receptor 10J1 (320 aa).

The Extracellular segment spans residues methionine 1 to isoleucine 36. Asparagine 9 and asparagine 16 each carry an N-linked (GlcNAc...) asparagine glycan. A helical membrane pass occupies residues threonine 37–valine 57. Residues threonine 58–histidine 65 lie on the Cytoplasmic side of the membrane. Residues leucine 66–leucine 86 form a helical membrane-spanning segment. The Extracellular portion of the chain corresponds to valine 87–threonine 110. Residues cysteine 108 and cysteine 199 are joined by a disulfide bond. Residues glutamine 111–tyrosine 131 traverse the membrane as a helical segment. Over aspartate 132–arginine 150 the chain is Cytoplasmic. Residues leucine 151–valine 171 form a helical membrane-spanning segment. At threonine 172 to isoleucine 207 the chain is on the extracellular side. A helical transmembrane segment spans residues leucine 208 to serine 227. Residues tyrosine 228 to alanine 247 are Cytoplasmic-facing. Residues phenylalanine 248–alanine 268 traverse the membrane as a helical segment. Over tyrosine 269 to aspartate 281 the chain is Extracellular. Residues glutamine 282–leucine 302 traverse the membrane as a helical segment. Topologically, residues arginine 303–serine 320 are cytoplasmic.

It belongs to the G-protein coupled receptor 1 family.

The protein localises to the cell membrane. Functionally, odorant receptor. The sequence is that of Olfactory receptor 10J1 (OR10J1) from Homo sapiens (Human).